We begin with the raw amino-acid sequence, 914 residues long: Isoleucine--tRNA ligase (914 aa).

The 'HIGH' region motif lies at 57–67 (PYANGQIHMGH). E554 provides a ligand contact to L-isoleucyl-5'-AMP. A 'KMSKS' region motif is present at residues 595–599 (KMSKS). K598 serves as a coordination point for ATP. Zn(2+) is bound by residues C883, C886, C904, and C907.

Belongs to the class-I aminoacyl-tRNA synthetase family. IleS type 1 subfamily. As to quaternary structure, monomer. It depends on Zn(2+) as a cofactor.

The protein resides in the cytoplasm. The catalysed reaction is tRNA(Ile) + L-isoleucine + ATP = L-isoleucyl-tRNA(Ile) + AMP + diphosphate. In terms of biological role, catalyzes the attachment of isoleucine to tRNA(Ile). As IleRS can inadvertently accommodate and process structurally similar amino acids such as valine, to avoid such errors it has two additional distinct tRNA(Ile)-dependent editing activities. One activity is designated as 'pretransfer' editing and involves the hydrolysis of activated Val-AMP. The other activity is designated 'posttransfer' editing and involves deacylation of mischarged Val-tRNA(Ile). This Macrococcus caseolyticus (strain JCSC5402) (Macrococcoides caseolyticum) protein is Isoleucine--tRNA ligase.